The following is a 330-amino-acid chain: 4-hydroxythreonine-4-phosphate dehydrogenase (330 aa).

Substrate-binding residues include histidine 134 and threonine 135. Residues histidine 164, histidine 209, and histidine 264 each contribute to the a divalent metal cation site. Lysine 272, asparagine 281, and arginine 290 together coordinate substrate.

This sequence belongs to the PdxA family. As to quaternary structure, homodimer. It depends on Zn(2+) as a cofactor. Mg(2+) is required as a cofactor. Co(2+) serves as cofactor.

It is found in the cytoplasm. The catalysed reaction is 4-(phosphooxy)-L-threonine + NAD(+) = 3-amino-2-oxopropyl phosphate + CO2 + NADH. It functions in the pathway cofactor biosynthesis; pyridoxine 5'-phosphate biosynthesis; pyridoxine 5'-phosphate from D-erythrose 4-phosphate: step 4/5. Functionally, catalyzes the NAD(P)-dependent oxidation of 4-(phosphooxy)-L-threonine (HTP) into 2-amino-3-oxo-4-(phosphooxy)butyric acid which spontaneously decarboxylates to form 3-amino-2-oxopropyl phosphate (AHAP). This chain is 4-hydroxythreonine-4-phosphate dehydrogenase, found in Pseudoalteromonas translucida (strain TAC 125).